Here is a 550-residue protein sequence, read N- to C-terminus: Aspartate--tRNA ligase (550 aa).

L-aspartate is bound at residue Glu-162. The tract at residues 186–189 (QIYK) is aspartate. Position 208 (Arg-208) interacts with L-aspartate. ATP contacts are provided by residues 208 to 210 (RDE) and Gln-217. L-aspartate is bound at residue His-417. Residue Glu-451 participates in ATP binding. Residue Arg-458 participates in L-aspartate binding. 499 to 502 (GIDR) contacts ATP.

This sequence belongs to the class-II aminoacyl-tRNA synthetase family. Type 1 subfamily. In terms of assembly, homodimer.

Its subcellular location is the cytoplasm. The catalysed reaction is tRNA(Asp) + L-aspartate + ATP = L-aspartyl-tRNA(Asp) + AMP + diphosphate. Catalyzes the attachment of L-aspartate to tRNA(Asp) in a two-step reaction: L-aspartate is first activated by ATP to form Asp-AMP and then transferred to the acceptor end of tRNA(Asp). The polypeptide is Aspartate--tRNA ligase (Mycoplasma genitalium (strain ATCC 33530 / DSM 19775 / NCTC 10195 / G37) (Mycoplasmoides genitalium)).